The chain runs to 1770 residues: MESQQLHQNPHSLHGSAYASVTSKEVPSNQDPLAVSASNLPEFDRDSTKVNSQQETTPGTSAVPENHHHVSPQPASVPPPQNGQYQQHGMMTPNKAMASNWAHYQQPSMMTCSHYQTSPAYYQPDPHYPLPQYIPPLSTSSPDPIDSQNQHSEVPQAETKVRNNVLPPHTLTSEENFSTWVKFYIRFLKNSNLGDIIPNDQGEIKSQMTYEEHAYIYNTFQAFAPFHLLPTWVKQILEINYADILTVLCKSVSKMQTNNQELKDWIALANLEYDGSTSADTFEITVSTIIQRLKENNINVSDRLACQLILKGLSGDFKYLRNQYRTKTNMKLSQLFAEIQLIYDENKIMNLNKPSQYKQHSEYKNVSRTSPNTTNTKVTTRNYHRTNSSKPRAAKAHNIATSSKFSRVNNDHINESTVSSQYLSDDNELSLGQQQKESKPTHTIDSNDELPDHLLIDSGASQTLVRSAHYLHHATPNSEINIVDAQKQDIPINAIGNLHFNFQNGTKTSIKALHTPNIAYDLLSLSELANQNITACFTRNTLERSDGTVLAPIVKHGDFYWLSKKYLIPSHISKLTINNVNKSKSVNKYPYPLIHRMLGHANFRSIQKSLKKNAVTYLKESDIEWSNASTYQCPDCLIGKSTKHRHVKGSRLKYQESYEPFQYLHTDIFGPVHHLPKSAPSYFISFTDEKTRFQWVYPLHDRREESILNVFTSILAFIKNQFNARVLVIQMDRGSEYTNKTLHKFFTNRGITACYTTTADSRAHGVAERLNRTLLNDCRTLLHCSGLPNHLWFSAVEFSTIIRNSLVSPKNDKSARQHAGLAGLDITTILPFGQPVIVNNHNPDSKIHPRGIPGYALHPSRNSYGYIIYLPSLKKTVDTTNYVILQDKQSKLDQFNYDTLTFDDDLNRLTAHNQSFIEQNETEQSYDQNTESDHDYQSEIEINSDPLVNDFSSQSINPLQLDKEPVQKVRAPKEVDADISEYNILPSTIRSRTPHIINKESTEMGGTVESDTTSPRHSSTFTARNQNRPGSTNEMIDLTSQDRVNYGLENIKTTRLGGTEEPYIQRNSDTNIKYRTTNSTPSIDDRSSNSESTTPIISIETKAVCDNTPSIDTDPPEYRSSDHATPNIMPDKSSKNVTADSILDDLPLPDLTHKSPTDTSDVSKDIPHIHSRQTNSSLGGMDDSNVLTTTKSKKRSLEDNETEIEVSRDTWNNKNMRSLEPPRSKKRINLIAAIKGVKSIKPVRTTLRYDEAITYNKDNKEKDRYVEAYHKEISQLLKMNTWDTNKYYDRNDIDPKKVINSMFIFNKKRDGTHKARFVARGDIQHPDTYDSDMQSNTVHHYALMTSLSIALDNDYYITQLDISSAYLYADIKEELYIRPPPHLGLNDKLLRLRKSLYGLKQSGANWYETIKSYLINCCDMQEVRGWSCVFKNSQVTICLFVDDMILFSKDLNANKKIITTLKKQYDTKIINLGESDNEIQYDILGLEIKYQRSKYMKLGMEKSLTEKLPKLNVPLNPKGKKLRAPGQPGHYIDQDELEIDEDEYKEKVHEMQKLIGLASYVGYKFRFDLLYYINTLAQHILFPSRQVLDMTYELIQFMWDTRDKQLIWHKNKPTKPDNKLVAISDASYGNQPYYKSQIGNIFLLNGKVIGGKSTKASLTCTSTTEAEIHAVSEAIPLLNNLSHLVQELNKKPIIKGLLTDSRSTISIIKSTNEEKFRNRFFGTKAMRLRDEVSGNNLYVYYIETKKNIADVMTKPLPIKTFKLLTNKWIH.

Composition is skewed to polar residues over residues 1–11 (MESQQLHQNPH), 19–39 (ASVTSKEVPSNQDPLAVSASN), and 49–60 (KVNSQQETTPGT). Disordered regions lie at residues 1–86 (MESQ…GQYQ) and 359–453 (QHSE…LPDH). Positions 295 to 397 (ENNINVSDRL…SSKPRAAKAH (103 aa)) are RNA-binding. Residues 369 to 381 (TSPNTTNTKVTTR) are compositionally biased toward low complexity. 2 stretches are compositionally biased toward polar residues: residues 399-408 (IATSSKFSRV) and 415-435 (ESTVSSQYLSDDNELSLGQQQ). D457 serves as the catalytic For protease activity; shared with dimeric partner. Positions 579 to 636 (NVNKSKSVNKYPYPLIHRMLGHANFRSIQKSLKKNAVTYLKESDIEWSNASTYQCPDC) are integrase-type zinc finger-like. One can recognise an Integrase catalytic domain in the interval 656-831 (ESYEPFQYLH…AGLDITTILP (176 aa)). Mg(2+)-binding residues include D667 and D732. 4 disordered regions span residues 1004–1034 (MGGTVESDTTSPRHSSTFTARNQNRPGSTNE), 1059–1135 (TEEP…KSSK), 1146–1165 (LPLPDLTHKSPTDTSDVSKD), and 1170–1205 (HSRQTNSSLGGMDDSNVLTTTKSKKRSLEDNETEIE). 2 stretches are compositionally biased toward polar residues: residues 1009 to 1034 (ESDTTSPRHSSTFTARNQNRPGSTNE) and 1065 to 1082 (QRNSDTNIKYRTTNSTPS). The span at 1151–1165 (LTHKSPTDTSDVSKD) shows a compositional bias: basic and acidic residues. A Bipartite nuclear localization signal motif is present at residues 1193-1227 (KKRSLEDNETEIEVSRDTWNNKNMRSLEPPRSKKR). A Reverse transcriptase Ty1/copia-type domain is found at 1353–1491 (NDYYITQLDI…DILGLEIKYQ (139 aa)). Residues D1361, D1442, D1443, D1625, E1667, and D1700 each coordinate Mg(2+). The region spanning 1625–1767 (DASYGNQPYY…IKTFKLLTNK (143 aa)) is the RNase H Ty1/copia-type domain.

The capsid protein forms a homotrimer, from which the VLPs are assembled. The protease is a homodimer, whose active site consists of two apposed aspartic acid residues. In terms of processing, initially, virus-like particles (VLPs) are composed of the structural unprocessed proteins Gag and Gag-Pol, and also contain the host initiator methionine tRNA (tRNA(i)-Met) which serves as a primer for minus-strand DNA synthesis, and a dimer of genomic Ty RNA. Processing of the polyproteins occurs within the particle and proceeds by an ordered pathway, called maturation. First, the protease (PR) is released by autocatalytic cleavage of the Gag-Pol polyprotein, and this cleavage is a prerequisite for subsequent processing at the remaining sites to release the mature structural and catalytic proteins. Maturation takes place prior to the RT reaction and is required to produce transposition-competent VLPs.

The protein resides in the cytoplasm. The protein localises to the nucleus. It carries out the reaction DNA(n) + a 2'-deoxyribonucleoside 5'-triphosphate = DNA(n+1) + diphosphate. It catalyses the reaction Endonucleolytic cleavage to 5'-phosphomonoester.. In terms of biological role, capsid protein (CA) is the structural component of the virus-like particle (VLP), forming the shell that encapsulates the retrotransposons dimeric RNA genome. The particles are assembled from trimer-clustered units and there are holes in the capsid shells that allow for the diffusion of macromolecules. CA also has nucleocapsid-like chaperone activity, promoting primer tRNA(i)-Met annealing to the multipartite primer-binding site (PBS), dimerization of Ty2 RNA and initiation of reverse transcription. Its function is as follows. The aspartyl protease (PR) mediates the proteolytic cleavages of the Gag and Gag-Pol polyproteins after assembly of the VLP. Functionally, reverse transcriptase/ribonuclease H (RT) is a multifunctional enzyme that catalyzes the conversion of the retro-elements RNA genome into dsDNA within the VLP. The enzyme displays a DNA polymerase activity that can copy either DNA or RNA templates, and a ribonuclease H (RNase H) activity that cleaves the RNA strand of RNA-DNA heteroduplexes during plus-strand synthesis and hydrolyzes RNA primers. The conversion leads to a linear dsDNA copy of the retrotransposon that includes long terminal repeats (LTRs) at both ends. Integrase (IN) targets the VLP to the nucleus, where a subparticle preintegration complex (PIC) containing at least integrase and the newly synthesized dsDNA copy of the retrotransposon must transit the nuclear membrane. Once in the nucleus, integrase performs the integration of the dsDNA into the host genome. The sequence is that of Transposon Ty2-F Gag-Pol polyprotein (TY2B-F) from Saccharomyces cerevisiae (strain ATCC 204508 / S288c) (Baker's yeast).